The chain runs to 361 residues: 3-dehydroquinate synthase (361 aa).

Belongs to the archaeal-type DHQ synthase family.

The enzyme catalyses 2-amino-2,3,7-trideoxy-D-lyxo-hept-6-ulosonate + NAD(+) + H2O = 3-dehydroquinate + NH4(+) + NADH + H(+). Catalyzes the oxidative deamination and cyclization of 2-amino-3,7-dideoxy-D-threo-hept-6-ulosonic acid (ADH) to yield 3-dehydroquinate (DHQ), which is fed into the canonical shikimic pathway of aromatic amino acid biosynthesis. The sequence is that of 3-dehydroquinate synthase from Methanococcus maripaludis (strain C7 / ATCC BAA-1331).